Here is a 25-residue protein sequence, read N- to C-terminus: Caerin-1.18 (25 aa).

The residue at position 25 (Leu25) is a Leucine amide.

In terms of tissue distribution, expressed by the skin dorsal glands.

It localises to the secreted. Its function is as follows. Shows significant activity against Gram-positive organisms, but is less effective against Gram-negative organisms. This is Caerin-1.18 from Ranoidea gracilenta (Dainty green tree frog).